Consider the following 741-residue polypeptide: Multifunctional procollagen lysine hydroxylase and glycosyltransferase LH3 (741 aa).

The N-terminal stretch at 1 to 27 is a signal peptide; it reads MAASVPEPRLLLLLLLLLPPLPPVTSA. Residues 28-293 are required for glycosyltransferase activity; that stretch reads SDRPRGANPV…FCNLNRRTLP (266 aa). 47–49 is a binding site for UDP; it reads VAT. Residue asparagine 66 is glycosylated (N-linked (GlcNAc...) asparagine). Mn(2+) is bound by residues aspartate 115, aspartate 118, and histidine 256. Position 115–117 (115–117) interacts with UDP; sequence DSY. Residue 259–262 participates in UDP binding; sequence GPTK. 2 disulfides stabilise this stretch: cysteine 282-cysteine 285 and cysteine 382-cysteine 388. Residues 298-523 form an accessory region region; sequence PPRVLLAVFV…EFGRLLSTSH (226 aa). N-linked (GlcNAc...) asparagine glycosylation occurs at asparagine 551. A disulfide bridge connects residues cysteine 566 and cysteine 701. 2-oxoglutarate-binding residues include arginine 602 and tyrosine 659. Residues 650-741 form the Fe2OG dioxygenase domain; it reads RAVMNFVVRY…RYIMVSFVDP (92 aa). Positions 670 and 672 each coordinate Fe cation. The important for dimerization stretch occupies residues 675-718; that stretch reads TFTLNVALNHKGVDYEGGGCRFLRYDCRVSSPRKGWALLHPGRL. Asparagine 679 is a 2-oxoglutarate binding site. Histidine 722 contributes to the Fe cation binding site. Arginine 732 contacts 2-oxoglutarate.

Homodimer. Fe(2+) serves as cofactor. The cofactor is L-ascorbate. Mn(2+) is required as a cofactor. Detected in heart and bone.

The protein localises to the rough endoplasmic reticulum. It localises to the endoplasmic reticulum lumen. It is found in the endoplasmic reticulum membrane. Its subcellular location is the secreted. The protein resides in the extracellular space. The enzyme catalyses L-lysyl-[collagen] + 2-oxoglutarate + O2 = (5R)-5-hydroxy-L-lysyl-[collagen] + succinate + CO2. The catalysed reaction is (5R)-5-hydroxy-L-lysyl-[collagen] + UDP-alpha-D-galactose = (5R)-5-O-(beta-D-galactosyl)-5-hydroxy-L-lysyl-[collagen] + UDP + H(+). It catalyses the reaction (5R)-5-O-(beta-D-galactosyl)-5-hydroxy-L-lysyl-[collagen] + UDP-alpha-D-glucose = (5R)-5-O-[alpha-D-glucosyl-(1-&gt;2)-beta-D-galactosyl]-5-hydroxy-L-lysyl-[collagen] + UDP + H(+). Its function is as follows. Multifunctional enzyme that catalyzes a series of post-translational modifications on Lys residues in procollagen. Plays a redundant role in catalyzing the formation of hydroxylysine residues in -Xaa-Lys-Gly- sequences in collagens. Plays a redundant role in catalyzing the transfer of galactose onto hydroxylysine groups, giving rise to galactosyl 5-hydroxylysine. Has an essential role by catalyzing the subsequent transfer of glucose moieties, giving rise to 1,2-glucosylgalactosyl-5-hydroxylysine residues. Catalyzes hydroxylation and glycosylation of Lys residues in the MBL1 collagen-like domain, giving rise to hydroxylysine and 1,2-glucosylgalactosyl-5-hydroxylysine residues. Catalyzes hydroxylation and glycosylation of Lys residues in the ADIPOQ collagen-like domain, giving rise to hydroxylysine and 1,2-glucosylgalactosyl-5-hydroxylysine residues. Essential for normal biosynthesis and secretion of type IV collagens. Essential for normal formation of basement membranes. The chain is Multifunctional procollagen lysine hydroxylase and glycosyltransferase LH3 (Plod3) from Rattus norvegicus (Rat).